Here is a 304-residue protein sequence, read N- to C-terminus: Aspartate carbamoyltransferase catalytic subunit (304 aa).

Carbamoyl phosphate is bound by residues R54 and T55. K83 provides a ligand contact to L-aspartate. R104, H132, and Q135 together coordinate carbamoyl phosphate. Residues R165 and R226 each contribute to the L-aspartate site. Positions 265 and 266 each coordinate carbamoyl phosphate.

The protein belongs to the aspartate/ornithine carbamoyltransferase superfamily. ATCase family. As to quaternary structure, heterooligomer of catalytic and regulatory chains.

It catalyses the reaction carbamoyl phosphate + L-aspartate = N-carbamoyl-L-aspartate + phosphate + H(+). Its pathway is pyrimidine metabolism; UMP biosynthesis via de novo pathway; (S)-dihydroorotate from bicarbonate: step 2/3. Its function is as follows. Catalyzes the condensation of carbamoyl phosphate and aspartate to form carbamoyl aspartate and inorganic phosphate, the committed step in the de novo pyrimidine nucleotide biosynthesis pathway. The protein is Aspartate carbamoyltransferase catalytic subunit of Pyrobaculum islandicum (strain DSM 4184 / JCM 9189 / GEO3).